The sequence spans 349 residues: Holliday junction branch migration complex subunit RuvB (349 aa).

The tract at residues 1 to 185 (MSQEKERLIS…FGSIFRLDFY (185 aa)) is large ATPase domain (RuvB-L). Residues Leu-24, Arg-25, Gly-66, Lys-69, Thr-70, Thr-71, 132 to 134 (EDY), Arg-175, Tyr-185, and Arg-222 contribute to the ATP site. Position 70 (Thr-70) interacts with Mg(2+). The tract at residues 186–256 (DEEAIHDIVR…IAAESLACLE (71 aa)) is small ATPAse domain (RuvB-S). Positions 259–349 (KLGLDEIDHK…QQGLWTENGS (91 aa)) are head domain (RuvB-H). DNA is bound by residues Arg-314 and Arg-319.

This sequence belongs to the RuvB family. Homohexamer. Forms an RuvA(8)-RuvB(12)-Holliday junction (HJ) complex. HJ DNA is sandwiched between 2 RuvA tetramers; dsDNA enters through RuvA and exits via RuvB. An RuvB hexamer assembles on each DNA strand where it exits the tetramer. Each RuvB hexamer is contacted by two RuvA subunits (via domain III) on 2 adjacent RuvB subunits; this complex drives branch migration. In the full resolvosome a probable DNA-RuvA(4)-RuvB(12)-RuvC(2) complex forms which resolves the HJ.

The protein localises to the cytoplasm. The enzyme catalyses ATP + H2O = ADP + phosphate + H(+). Functionally, the RuvA-RuvB-RuvC complex processes Holliday junction (HJ) DNA during genetic recombination and DNA repair, while the RuvA-RuvB complex plays an important role in the rescue of blocked DNA replication forks via replication fork reversal (RFR). RuvA specifically binds to HJ cruciform DNA, conferring on it an open structure. The RuvB hexamer acts as an ATP-dependent pump, pulling dsDNA into and through the RuvAB complex. RuvB forms 2 homohexamers on either side of HJ DNA bound by 1 or 2 RuvA tetramers; 4 subunits per hexamer contact DNA at a time. Coordinated motions by a converter formed by DNA-disengaged RuvB subunits stimulates ATP hydrolysis and nucleotide exchange. Immobilization of the converter enables RuvB to convert the ATP-contained energy into a lever motion, pulling 2 nucleotides of DNA out of the RuvA tetramer per ATP hydrolyzed, thus driving DNA branch migration. The RuvB motors rotate together with the DNA substrate, which together with the progressing nucleotide cycle form the mechanistic basis for DNA recombination by continuous HJ branch migration. Branch migration allows RuvC to scan DNA until it finds its consensus sequence, where it cleaves and resolves cruciform DNA. This is Holliday junction branch migration complex subunit RuvB from Dehalococcoides mccartyi (strain CBDB1).